The following is a 73-amino-acid chain: Small ribosomal subunit protein bS18 (73 aa).

This sequence belongs to the bacterial ribosomal protein bS18 family. Part of the 30S ribosomal subunit. Forms a tight heterodimer with protein bS6.

Binds as a heterodimer with protein bS6 to the central domain of the 16S rRNA, where it helps stabilize the platform of the 30S subunit. This Prochlorococcus marinus (strain NATL2A) protein is Small ribosomal subunit protein bS18.